A 382-amino-acid chain; its full sequence is Prophage ps2 probable integrase (382 aa).

The 80-residue stretch at 63–142 (AKFTDIAEEW…TLNLIFDYAV (80 aa)) folds into the Core-binding (CB) domain. In terms of domain architecture, Tyr recombinase spans 170-376 (IQNKYLEQNE…TENMKSSIID (207 aa)). Residues Arg209, Lys242, His326, Arg329, and His352 contribute to the active site. The active-site O-(3'-phospho-DNA)-tyrosine intermediate is the Tyr363.

It belongs to the 'phage' integrase family.

In Lactococcus lactis subsp. lactis (strain IL1403) (Streptococcus lactis), this protein is Prophage ps2 probable integrase (ps201).